The chain runs to 73 residues: Large ribosomal subunit protein bL31 (73 aa).

This sequence belongs to the bacterial ribosomal protein bL31 family. Type A subfamily. As to quaternary structure, part of the 50S ribosomal subunit.

Functionally, binds the 23S rRNA. The polypeptide is Large ribosomal subunit protein bL31 (Cereibacter sphaeroides (strain ATCC 17025 / ATH 2.4.3) (Rhodobacter sphaeroides)).